We begin with the raw amino-acid sequence, 775 residues long: GRIP and coiled-coil domain-containing protein 1 (775 aa).

Residues S13–V61 are a coiled coil. Residues D84–D93 show a composition bias toward basic and acidic residues. Disordered regions lie at residues D84–E153 and G614–L639. Low complexity-rich tracts occupy residues S94 to T110, A133 to G147, and D629 to S638. Positions E153–L763 form a coiled coil. Positions Q713–L763 constitute a GRIP domain.

The protein localises to the cytoplasm. The protein resides in the golgi apparatus membrane. Functionally, probably involved in maintaining Golgi structure. The protein is GRIP and coiled-coil domain-containing protein 1 (GCC1) of Homo sapiens (Human).